The following is a 394-amino-acid chain: Protein TsgA homolog (394 aa).

Transmembrane regions (helical) follow at residues 11–31 (WISF…GMVM), 51–71 (FLNA…EIVP), 78–98 (FGFV…SIAL), 101–121 (VSMF…TFLI), 134–154 (LLFT…VAAV), 162–182 (WYWV…LTFG), 206–226 (IGVL…LGFI), 250–270 (FWMS…FFDL), 273–293 (ILTV…NGAP), 297–317 (AWFI…IITL), 332–352 (FVLT…GPIV), and 361–381 (LQTA…LGFV).

It belongs to the major facilitator superfamily. TsgA family.

The protein resides in the cell inner membrane. The sequence is that of Protein TsgA homolog from Enterobacter sp. (strain 638).